Reading from the N-terminus, the 564-residue chain is MFS-type transporter astH (564 aa).

An N-linked (GlcNAc...) asparagine glycan is attached at N23. Residues 26-59 form a disordered region; sequence KDTLVNCSPDPENPEKGQASSPRTQISVDDNEES. Residues 43-53 show a composition bias toward polar residues; that stretch reads QASSPRTQISV. A run of 4 helical transmembrane segments spans residues 69-89, 106-126, 143-163, and 197-217; these read LAMIMISLCLAVFCLALDTTI, DVGWYGSAYLLTTSALTLSFG, GMFEIGSLICGATPNSLGLII, and GILGGLFGVASVVGPLIGGAF. Residue N220 is glycosylated (N-linked (GlcNAc...) asparagine). A run of 6 helical transmembrane segments spans residues 225–245, 266–286, 297–317, 339–359, 375–395, and 396–416; these read WCFYINLPLGAVTGLFLILFF, LLGSLCFLPAIICVLLALQWG, IIALFTVFGVLLLAFAGVQWW, LFSFCLNASFIIFTYYLPMWF, LPMVLAVVIFSIISGGLVGAL, and GYYTPFMVIAPLIAAIGAGLL. N425 is a glycosylation site (N-linked (GlcNAc...) asparagine). 2 helical membrane passes run 461–481 and 537–557; these read TGTVIVMFMQTIGGAIFMSVG and FYVAVAMAVLALPGALVMQWI.

It belongs to the major facilitator superfamily. TCR/Tet family.

It is found in the membrane. MFS-type transporter; part of the gene cluster that mediates the biosynthesis of astellolides, drimane-type sesquiterpene esters that show antimicrobial, anti-inflammatory, and anti-tumor activities. Seems not to be involved in astellolides translocation. The protein is MFS-type transporter astH of Aspergillus oryzae (strain ATCC 42149 / RIB 40) (Yellow koji mold).